The chain runs to 504 residues: Glycerol kinase (504 aa).

Residue threonine 12 coordinates ADP. Threonine 12, threonine 13, and serine 14 together coordinate ATP. Threonine 12 serves as a coordination point for sn-glycerol 3-phosphate. Arginine 16 serves as a coordination point for ADP. Sn-glycerol 3-phosphate is bound by residues arginine 82, glutamate 83, tyrosine 134, and aspartate 246. Residues arginine 82, glutamate 83, tyrosine 134, aspartate 246, and glutamine 247 each contribute to the glycerol site. ADP is bound by residues threonine 268 and glycine 312. ATP contacts are provided by threonine 268, glycine 312, glutamine 316, and glycine 413. Positions 413 and 417 each coordinate ADP.

This sequence belongs to the FGGY kinase family.

It carries out the reaction glycerol + ATP = sn-glycerol 3-phosphate + ADP + H(+). Its pathway is polyol metabolism; glycerol degradation via glycerol kinase pathway; sn-glycerol 3-phosphate from glycerol: step 1/1. Its activity is regulated as follows. Inhibited by fructose 1,6-bisphosphate (FBP). Its function is as follows. Key enzyme in the regulation of glycerol uptake and metabolism. Catalyzes the phosphorylation of glycerol to yield sn-glycerol 3-phosphate. This is Glycerol kinase from Renibacterium salmoninarum (strain ATCC 33209 / DSM 20767 / JCM 11484 / NBRC 15589 / NCIMB 2235).